The primary structure comprises 312 residues: DNA-directed RNA polymerase subunit alpha (312 aa).

Residues 1–226 (MIEFEKPKIT…DHLNLFVDLS (226 aa)) form an alpha N-terminal domain (alpha-NTD) region. Residues 243 to 312 (TERVLDKIIE…ELGLSLKKRK (70 aa)) form an alpha C-terminal domain (alpha-CTD) region.

The protein belongs to the RNA polymerase alpha chain family. Homodimer. The RNAP catalytic core consists of 2 alpha, 1 beta, 1 beta' and 1 omega subunit. When a sigma factor is associated with the core the holoenzyme is formed, which can initiate transcription.

The enzyme catalyses RNA(n) + a ribonucleoside 5'-triphosphate = RNA(n+1) + diphosphate. DNA-dependent RNA polymerase catalyzes the transcription of DNA into RNA using the four ribonucleoside triphosphates as substrates. This Lactococcus lactis subsp. lactis (strain IL1403) (Streptococcus lactis) protein is DNA-directed RNA polymerase subunit alpha.